We begin with the raw amino-acid sequence, 393 residues long: Ubiquitin-like modifier-activating enzyme 5 (393 aa).

Gly-75, Asp-96, Lys-119, Asn-142, and Asn-175 together coordinate ATP. Positions 217 and 220 each coordinate Zn(2+). Cys-241 serves as the catalytic Glycyl thioester intermediate. Zn(2+) contacts are provided by Cys-294 and Cys-299.

It belongs to the ubiquitin-activating E1 family. UBA5 subfamily.

E1-like enzyme which activates UFM1. This chain is Ubiquitin-like modifier-activating enzyme 5, found in Bombyx mori (Silk moth).